The following is a 196-amino-acid chain: Ribosome maturation factor RimM (196 aa).

In terms of domain architecture, PRC barrel spans 118 to 196; the sequence is QGEYYWRDLI…EMTVDWDPDF (79 aa).

This sequence belongs to the RimM family. As to quaternary structure, binds ribosomal protein uS19.

Its subcellular location is the cytoplasm. In terms of biological role, an accessory protein needed during the final step in the assembly of 30S ribosomal subunit, possibly for assembly of the head region. Essential for efficient processing of 16S rRNA. May be needed both before and after RbfA during the maturation of 16S rRNA. It has affinity for free ribosomal 30S subunits but not for 70S ribosomes. This chain is Ribosome maturation factor RimM, found in Alcanivorax borkumensis (strain ATCC 700651 / DSM 11573 / NCIMB 13689 / SK2).